Here is a 696-residue protein sequence, read N- to C-terminus: MRRFLLLYATQRGQAKAIAEEISEQAVSHGFSADLHCISESEKYDLKTETGPLVMVVSTTGTGDPPDTARKFVKEIHNKTLPTDYFAHLRYGLLGLGDSEYTYFCNGGKVIDKRLQELGAQRFYDTGHADDCVGLELVVEPWIDGLWAALTKHFKSLGGQENMSDTLSRASDAPLSTAMKPELLHIQSQVELLRLEDVGERDSELREQNETNRGQQGRIEDFDSSLVHSVPPLSQSSLSIPAVPPEYLEVHLQESLGQEENQASVPSGDPSFQVPISKAIRLTTNDAVKSTLLLELDISKIEFSHQPGDSFNVTCPNSDREVEELLQRLQLADKRAHRVILKIKTDTKKKGAALPAHVPEGRSLQFILTWCLEIRAVPKKAFLRALAEHTSSATEKRRLQELCSKQGAADYNRFIRDASVCLLDLLLTFPSCQPPLSLLLEHLPKLQPRPYSCASSSLRHPDKLHFVFNIVEFPPSTTAASPRKGVCTGWLATLVAPFLQPNTDVSNADSGDTLAPEIRISPRATNAFHLPEDPSAPIIMVGPGTGVAPFVGFLQHREKLQEQHPDGKFGAMWLFFGCRHKDRDYLFREELRHFLKTGVLTHLKVSFSRDAAPDGEEAPAKYVQDNLQRHSQQVARTLLQENGYIYVCGDAKNMAKDVNDTLIGIISNEAGVDKLEAMKTLATLKQEKRYLQDIWS.

One can recognise a Flavodoxin-like domain in the interval 4–147; sequence FLLLYATQRG…VVEPWIDGLW (144 aa). FMN-binding positions include 10-14 and 93-124; these read TQRGQ and LLGLGDSEYTYFCNGGKVIDKRLQELGAQRFY. A hinge region spans residues 166 to 245; it reads TLSRASDAPL…SSLSIPAVPP (80 aa). Residues Ser-171 and Ser-188 each carry the phosphoserine modification. Residues 269–531 enclose the FAD-binding FR-type domain; it reads DPSFQVPISK…PRATNAFHLP (263 aa). Residue Lys-289 coordinates NADP(+). FAD-binding positions include 449–452 and 485–488; these read RPYS and GVCT. Residues 608-609, 622-624, and Asp-657 each bind NADP(+); these read SR and YVQ. Trp-695 provides a ligand contact to FAD.

Forms a multiprotein complex with MMACHC, MMADHC and MTR. Requires FAD as cofactor. FMN serves as cofactor.

It is found in the cytoplasm. It carries out the reaction 2 methylcob(III)alamin-[methionine synthase] + 2 S-adenosyl-L-homocysteine + NADP(+) + H(+) = 2 cob(II)alamin-[methionine synthase] + 2 S-adenosyl-L-methionine + NADPH. The catalysed reaction is 2 cob(II)alamin + A + 2 H2O + 2 H(+) = 2 aquacob(III)alamin + AH2. Its function is as follows. Key enzyme in methionine and folate homeostasis responsible for the reactivation of methionine synthase (MTR/MS) activity by catalyzing the reductive methylation of MTR-bound cob(II)alamin. Cobalamin (vitamin B12) forms a complex with MTR to serve as an intermediary in methyl transfer reactions that cycles between MTR-bound methylcob(III)alamin and MTR bound-cob(I)alamin forms, and occasional oxidative escape of the cob(I)alamin intermediate during the catalytic cycle leads to the inactive cob(II)alamin species. The processing of cobalamin in the cytosol occurs in a multiprotein complex composed of at least MMACHC, MMADHC, MTRR and MTR which may contribute to shuttle safely and efficiently cobalamin towards MTR in order to produce methionine. Also necessary for the utilization of methyl groups from the folate cycle, thereby affecting transgenerational epigenetic inheritance. Also acts as a molecular chaperone for methionine synthase by stabilizing apoMTR and incorporating methylcob(III)alamin into apoMTR to form the holoenzyme. Also serves as an aquacob(III)alamin reductase by reducing aquacob(III)alamin to cob(II)alamin; this reduction leads to stimulation of the conversion of apoMTR and aquacob(III)alamin to MTR holoenzyme. In Mus musculus (Mouse), this protein is Methionine synthase reductase.